The sequence spans 547 residues: MSAKDIKFGPEARNLMLDGVNMLANAVKVTLGPKGRNVVLDKSFGGPTITKDGVSVAQEITLEGKFENMGAQMVKEVASKTNDIAGDGTTTATVLAQALVTEGVKSVAAGMNPMDLKRGIDKATEVAVNALHDFSQPCNDTKAIAQVGTISANSDVSVGDIIADAMEKVGQAGVITVEEGSGFENELDVVEGMQFDRGYLSPYFVNNQDTMTADLESPFVLLHDAKISNIRDLLPALEIVQKSSKALLIIAEDIDGEALATLVVNNMRGIVKVAAVKAPGFGDRRKAILEDIAILTGSVVISEEVGLSLEKVTEEHLGTAKRIEIGKENTVIVDGAGKKSNIDGRVNQIKAQIETTTSDYDKEKLLERLAKLSGGVAVIKVGAATEVAMKEKKDHVDDALHATRAAVEEGVVPGGGVALVRTIKALDGLTGDNHDQNIGIDIAKRAMEAPLRQIVTNGGGEASVVLNNVADGKDNYGYNATTEEYGDMLKMGILDPTKVVRAALQHAASISGLMITTEAMITDIPQDATPTASPDMGGMGGMGGGMM.

Residues 30 to 33 (TLGP), Lys51, 87 to 91 (DGTTT), Gly415, and Asp495 contribute to the ATP site. The segment at 526-547 (QDATPTASPDMGGMGGMGGGMM) is disordered. The segment covering 537–547 (GGMGGMGGGMM) has biased composition (gly residues).

This sequence belongs to the chaperonin (HSP60) family. In terms of assembly, forms a cylinder of 14 subunits composed of two heptameric rings stacked back-to-back. Interacts with the co-chaperonin GroES.

The protein localises to the cytoplasm. The enzyme catalyses ATP + H2O + a folded polypeptide = ADP + phosphate + an unfolded polypeptide.. In terms of biological role, together with its co-chaperonin GroES, plays an essential role in assisting protein folding. The GroEL-GroES system forms a nano-cage that allows encapsulation of the non-native substrate proteins and provides a physical environment optimized to promote and accelerate protein folding. In Vesicomyosocius okutanii subsp. Calyptogena okutanii (strain HA), this protein is Chaperonin GroEL.